A 478-amino-acid chain; its full sequence is UDP-N-acetylmuramate--L-alanine ligase (478 aa).

Residue 126–132 (GTHGKTT) coordinates ATP.

It belongs to the MurCDEF family.

The protein localises to the cytoplasm. It carries out the reaction UDP-N-acetyl-alpha-D-muramate + L-alanine + ATP = UDP-N-acetyl-alpha-D-muramoyl-L-alanine + ADP + phosphate + H(+). It participates in cell wall biogenesis; peptidoglycan biosynthesis. Cell wall formation. The protein is UDP-N-acetylmuramate--L-alanine ligase of Mycolicibacterium vanbaalenii (strain DSM 7251 / JCM 13017 / BCRC 16820 / KCTC 9966 / NRRL B-24157 / PYR-1) (Mycobacterium vanbaalenii).